The following is a 417-amino-acid chain: NADH-quinone oxidoreductase subunit D (417 aa).

Belongs to the complex I 49 kDa subunit family. As to quaternary structure, NDH-1 is composed of 14 different subunits. Subunits NuoB, C, D, E, F, and G constitute the peripheral sector of the complex.

It localises to the cell inner membrane. It carries out the reaction a quinone + NADH + 5 H(+)(in) = a quinol + NAD(+) + 4 H(+)(out). Its function is as follows. NDH-1 shuttles electrons from NADH, via FMN and iron-sulfur (Fe-S) centers, to quinones in the respiratory chain. The immediate electron acceptor for the enzyme in this species is believed to be ubiquinone. Couples the redox reaction to proton translocation (for every two electrons transferred, four hydrogen ions are translocated across the cytoplasmic membrane), and thus conserves the redox energy in a proton gradient. This Cupriavidus taiwanensis (strain DSM 17343 / BCRC 17206 / CCUG 44338 / CIP 107171 / LMG 19424 / R1) (Ralstonia taiwanensis (strain LMG 19424)) protein is NADH-quinone oxidoreductase subunit D.